The primary structure comprises 301 residues: Cuticle collagen 1 (301 aa).

A signal peptide spans methionine 1 to serine 37. Residues arginine 79–arginine 82 are furin-like endopeptidase recognition region. Triple-helical region stretches follow at residues glycine 105–proline 134, glycine 153–aspartate 179, glycine 183–proline 209, and glycine 218–cysteine 283. The tract at residues proline 109–proline 284 is disordered. Pro residues-rich tracts occupy residues proline 131–proline 164 and serine 184–proline 193. Residues alanine 194–alanine 210 are compositionally biased toward low complexity. Positions serine 226–proline 258 are enriched in pro residues.

Belongs to the cuticular collagen family. In terms of assembly, collagen polypeptide chains are complexed within the cuticle by disulfide bonds and other types of covalent cross-links.

The protein resides in the secreted. It localises to the extracellular space. Its function is as follows. Secreted collagen that forms part of the nematode cuticle, which functions as an exoskeleton and a barrier to protect the worm from its environment. Secretion and subsequent incorporation into the cuticle is likely mediated by bli-4, which probably cleaves at the N-terminal consensus furin cleavage site. This Caenorhabditis elegans protein is Cuticle collagen 1 (sqt-3).